The primary structure comprises 416 residues: Splicing factor U2AF 50 kDa subunit (416 aa).

Over residues 1-10 the composition is skewed to basic and acidic residues; it reads MGYDDRERDR. The tract at residues 1 to 47 is disordered; the sequence is MGYDDRERDRERRRHRSRSRDRHRERSRDRRHHRNSRRKPSLYWDVP. Basic residues-rich tracts occupy residues 11–21 and 29–40; these read ERRRHRSRSRD and DRRHHRNSRRKP. RRM domains lie at 93–175, 207–285, and 318–408; these read RRLY…RPHD, HKIF…RASV, and EVLC…YFDP.

It belongs to the splicing factor SR family. In terms of assembly, forms a heterodimer with the U2AF small subunit.

It localises to the nucleus. Its function is as follows. Necessary for the splicing of pre-mRNA. Binds to the polypyrimidine tract of introns early during spliceosome assembly. The chain is Splicing factor U2AF 50 kDa subunit (U2af50) from Drosophila melanogaster (Fruit fly).